Here is a 97-residue protein sequence, read N- to C-terminus: Protein Vpr (97 aa).

The tract at residues 1–42 (MEQAPENQGPAKEPFNEWALELLEELKAEAVRHFPRPWLHAL) is homooligomerization. Ser-79, Ser-95, and Ser-97 each carry phosphoserine; by host.

This sequence belongs to the HIV-1 VPR protein family. Homooligomer, may form homodimer. Interacts with p6-gag region of the Pr55 Gag precursor protein through a (Leu-X-X)4 motif near the C-terminus of the P6gag protein. Interacts with host UNG. May interact with host RAD23A/HHR23A. Interacts with host VPRBP/DCAF1, leading to hijack the CUL4A-RBX1-DDB1-DCAF1/VPRBP complex, mediating ubiquitination of host proteins such as TERT and ZGPAT and arrest of the cell cycle in G2 phase. In terms of processing, phosphorylated on several residues by host. These phosphorylations regulate VPR activity for the nuclear import of the HIV-1 pre-integration complex.

Its subcellular location is the virion. It localises to the host nucleus. The protein resides in the host extracellular space. Functionally, during virus replication, may deplete host UNG protein, and incude G2-M cell cycle arrest. Acts by targeting specific host proteins for degradation by the 26S proteasome, through association with the cellular CUL4A-DDB1 E3 ligase complex by direct interaction with host VPRPB/DCAF-1. Cell cycle arrest reportedly occurs within hours of infection and is not blocked by antiviral agents, suggesting that it is initiated by the VPR carried into the virion. Additionally, VPR induces apoptosis in a cell cycle dependent manner suggesting that these two effects are mechanistically linked. Detected in the serum and cerebrospinal fluid of AIDS patient, VPR may also induce cell death to bystander cells. In terms of biological role, during virus entry, plays a role in the transport of the viral pre-integration (PIC) complex to the host nucleus. This function is crucial for viral infection of non-dividing macrophages. May act directly at the nuclear pore complex, by binding nucleoporins phenylalanine-glycine (FG)-repeat regions. This is Protein Vpr from Human immunodeficiency virus type 1 group O (isolate ANT70) (HIV-1).